We begin with the raw amino-acid sequence, 580 residues long: FAD-dependent monooxygenase yanF (580 aa).

A disordered region spans residues 1-21; it reads MSSSAECRPIGWGGWGPDPNT. The FAD-binding PCMH-type domain occupies 150-322; that stretch reads CRLNASCIVT…VEYDLTTNTG (173 aa). His-187 is subject to Pros-8alpha-FAD histidine.

This sequence belongs to the oxygen-dependent FAD-linked oxidoreductase family.

The protein operates within secondary metabolite biosynthesis; terpenoid biosynthesis. In terms of biological role, FAD-dependent monooxygenase; part of the gene cluster that mediates the biosynthesis of yanuthone D, a fungal isoprenoid epoxycyclohexenone that acts as an antibiotic against fungi and bacteria. The first step of the pathway is the synthesis of 6-methylsalicylic acid (6-MSA) by the polyketide synthase yanA. 6-MSA is then converted to m-cresol by the decarboxylase yanB. The cytochrome P450 monooxygenase yanC then catalyzes the oxidation of m-cresol to toluquinol. Epoxidation of toluquinol is then performed by the short chain dehydrogenase yanD, with the help of yanE, and a further prenylated by yanG leads to 7-deacetoxyyanuthone A. The next step is the hydroxylation of C-22 of 7-deacetoxyyanuthone A by the cytochrome P450 monooxygenase yanH to yield 22-deacetylyanuthone A. O-Mevalon transferase yanI then attaches mevalon to the hydroxyl group of 22-deacetylyanuthone A to produce yanuthone E. Finally, the FAD-dependent monooxygenase yanF oxidizes the hydroxyl group at C15 of yanuthone E to form yanuthone D. Furthermore, several branching points in the pathway lead to the production of yanuthones F and G from 7-deacetoxyyanuthone A; yanuthones H and I from 22-deacetylyanuthone A; and yanuthone J from yanuthone E. The sequence is that of FAD-dependent monooxygenase yanF from Aspergillus niger (strain ATCC 1015 / CBS 113.46 / FGSC A1144 / LSHB Ac4 / NCTC 3858a / NRRL 328 / USDA 3528.7).